The following is a 360-amino-acid chain: Outer membrane protein P2 (360 aa).

An N-terminal signal peptide occupies residues 1-20; sequence MKKTLAALIVGAFAASAANA.

This sequence belongs to the Gram-negative porin family. As to quaternary structure, homotrimer.

It localises to the cell outer membrane. Its function is as follows. Forms pores that allow passive diffusion of small molecules across the outer membrane. The chain is Outer membrane protein P2 (ompP2) from Haemophilus influenzae.